The chain runs to 356 residues: Histidinol-phosphate aminotransferase 1 (356 aa).

K210 is subject to N6-(pyridoxal phosphate)lysine.

Belongs to the class-II pyridoxal-phosphate-dependent aminotransferase family. Histidinol-phosphate aminotransferase subfamily. In terms of assembly, homodimer. The cofactor is pyridoxal 5'-phosphate.

The catalysed reaction is L-histidinol phosphate + 2-oxoglutarate = 3-(imidazol-4-yl)-2-oxopropyl phosphate + L-glutamate. It participates in amino-acid biosynthesis; L-histidine biosynthesis; L-histidine from 5-phospho-alpha-D-ribose 1-diphosphate: step 7/9. This Hydrogenovibrio crunogenus (strain DSM 25203 / XCL-2) (Thiomicrospira crunogena) protein is Histidinol-phosphate aminotransferase 1.